Reading from the N-terminus, the 122-residue chain is MADFNSPIQYLKEDSRDRTSIGSLEYDENADTMIPSFAAGLEEFEPIPDYDPTRSTSLYSQLTHNMERIAEEDDINFQHDTREFTSLVPEETDNKPEDDEESGAKPKKKKHLFPKLSSHKSK.

Disordered stretches follow at residues 1-27 (MADF…LEYD) and 85-122 (TSLV…HKSK). N-acetylalanine; by host is present on alanine 2. Over residues 105–122 (KPKKKKHLFPKLSSHKSK) the composition is skewed to basic residues.

Belongs to the asfivirus structural protein p14.5 family. As to quaternary structure, interacts with the major capsid protein. Interacts with host IRF3; this interaction interferes with the recruitment of IRF3 to TBK1. Acetylated.

It is found in the virion. Its function is as follows. Structural protein required for transport of intracellular particles from the assembly sites to the plasma membrane. Binds to both ssDNA and dsDNA. Suppressed the activation of the cGAS/STING pathway by interfering with the recruitment of IRF3 to TBK1, which in turn suppresses IRF3 phosphorylation, decreasing interferon production. In African swine fever virus (isolate Tick/Malawi/Lil 20-1/1983) (ASFV), this protein is Structural protein p14.5.